The following is a 519-amino-acid chain: Threonine synthase, chloroplastic (519 aa).

Residues 1–40 (MAASCMLRSSFISPGLPQLHHQSTSKPNNGIHFFTPIKAT) constitute a chloroplast transit peptide. An N6-(pyridoxal phosphate)lysine modification is found at K196. Residues 328–332 (GNLGN) and T465 each bind pyridoxal 5'-phosphate.

This sequence belongs to the threonine synthase family. Homodimer. Pyridoxal 5'-phosphate serves as cofactor.

It is found in the plastid. It localises to the chloroplast. It catalyses the reaction O-phospho-L-homoserine + H2O = L-threonine + phosphate. Its pathway is amino-acid biosynthesis; L-threonine biosynthesis; L-threonine from L-aspartate: step 5/5. Allosterically activated by S-adenosyl-methionine (SAM). Catalyzes the gamma-elimination of phosphate from L-phosphohomoserine and the beta-addition of water to produce L-threonine. This is Threonine synthase, chloroplastic from Solanum tuberosum (Potato).